The following is a 379-amino-acid chain: Succinyl-diaminopimelate desuccinylase (379 aa).

His70 provides a ligand contact to Zn(2+). Asp72 is a catalytic residue. Asp103 is a binding site for Zn(2+). Glu137 (proton acceptor) is an active-site residue. Zn(2+) is bound by residues Glu138, Glu166, and His352.

The protein belongs to the peptidase M20A family. DapE subfamily. Homodimer. It depends on Zn(2+) as a cofactor. Co(2+) serves as cofactor.

The catalysed reaction is N-succinyl-(2S,6S)-2,6-diaminopimelate + H2O = (2S,6S)-2,6-diaminopimelate + succinate. Its pathway is amino-acid biosynthesis; L-lysine biosynthesis via DAP pathway; LL-2,6-diaminopimelate from (S)-tetrahydrodipicolinate (succinylase route): step 3/3. In terms of biological role, catalyzes the hydrolysis of N-succinyl-L,L-diaminopimelic acid (SDAP), forming succinate and LL-2,6-diaminopimelate (DAP), an intermediate involved in the bacterial biosynthesis of lysine and meso-diaminopimelic acid, an essential component of bacterial cell walls. The polypeptide is Succinyl-diaminopimelate desuccinylase (Burkholderia cenocepacia (strain ATCC BAA-245 / DSM 16553 / LMG 16656 / NCTC 13227 / J2315 / CF5610) (Burkholderia cepacia (strain J2315))).